The chain runs to 160 residues: Large ribosomal subunit protein uL16 (160 aa).

A disordered region spans residues I138–K160. Residues K149–K160 are compositionally biased toward basic and acidic residues.

Belongs to the universal ribosomal protein uL16 family. Part of the 50S ribosomal subunit.

Functionally, binds 23S rRNA and is also seen to make contacts with the A and possibly P site tRNAs. The sequence is that of Large ribosomal subunit protein uL16 from Prochlorococcus marinus subsp. pastoris (strain CCMP1986 / NIES-2087 / MED4).